A 148-amino-acid polypeptide reads, in one-letter code: Azurin (148 aa).

Residues 1–18 (MRNQLLFALAFIPTIAAA) form the signal peptide. A Plastocyanin-like domain is found at 19–148 (ASNCEVNVSA…MMRGTVKLVD (130 aa)). A disulfide bridge connects residues C22 and C45. The Cu cation site is built by H65, C131, H136, and M140.

It is found in the periplasm. The protein operates within one-carbon metabolism; methylamine degradation. Functionally, probable electron acceptor for methylamine dehydrogenase. The polypeptide is Azurin (azu) (Methylobacillus flagellatus (strain ATCC 51484 / DSM 6875 / VKM B-1610 / KT)).